The chain runs to 248 residues: Ubiquinone biosynthesis O-methyltransferase (248 aa).

S-adenosyl-L-methionine contacts are provided by arginine 41, glycine 72, aspartate 93, and methionine 136.

This sequence belongs to the methyltransferase superfamily. UbiG/COQ3 family.

It carries out the reaction a 3-demethylubiquinol + S-adenosyl-L-methionine = a ubiquinol + S-adenosyl-L-homocysteine + H(+). The enzyme catalyses a 3-(all-trans-polyprenyl)benzene-1,2-diol + S-adenosyl-L-methionine = a 2-methoxy-6-(all-trans-polyprenyl)phenol + S-adenosyl-L-homocysteine + H(+). Its pathway is cofactor biosynthesis; ubiquinone biosynthesis. Its function is as follows. O-methyltransferase that catalyzes the 2 O-methylation steps in the ubiquinone biosynthetic pathway. The chain is Ubiquinone biosynthesis O-methyltransferase from Brucella anthropi (strain ATCC 49188 / DSM 6882 / CCUG 24695 / JCM 21032 / LMG 3331 / NBRC 15819 / NCTC 12168 / Alc 37) (Ochrobactrum anthropi).